Reading from the N-terminus, the 932-residue chain is Protocadherin gamma-A3 (932 aa).

The signal sequence occupies residues 1–29 (MTNCLSFRNGRGLALLCALLGTLCETGSG). Cadherin domains lie at 30 to 133 (QIRY…APNF), 134 to 242 (PTEE…PPMF), 243 to 347 (TQPE…APEI), 348 to 452 (TITS…PPTF), 453 to 562 (PHLS…APEI), and 570 to 682 (DGST…EPSA). At 30 to 692 (QIRYSVSEEL…KPNDSDLTLY (663 aa)) the chain is on the extracellular side. Residues asparagine 265, asparagine 419, and asparagine 545 are each glycosylated (N-linked (GlcNAc...) asparagine). Residue asparagine 685 is glycosylated (N-linked (GlcNAc...) asparagine). Residues 693-713 (LVVAVAAVSCVFLAFVIVLLA) traverse the membrane as a helical segment. The Cytoplasmic segment spans residues 714-932 (LRLRRWHKSR…KKKSGKKEKK (219 aa)). Disordered regions lie at residues 805 to 841 (NLLQ…WPNN) and 902 to 932 (ATLT…KEKK). Over residues 922 to 932 (NKKKSGKKEKK) the composition is skewed to basic residues.

It localises to the cell membrane. Its function is as follows. Potential calcium-dependent cell-adhesion protein. May be involved in the establishment and maintenance of specific neuronal connections in the brain. The protein is Protocadherin gamma-A3 (PCDHGA3) of Homo sapiens (Human).